The following is a 426-amino-acid chain: 5-methylthioadenosine/S-adenosylhomocysteine deaminase (426 aa).

2 residues coordinate Zn(2+): histidine 60 and histidine 62. Glutamate 89 and histidine 179 together coordinate substrate. Histidine 206 lines the Zn(2+) pocket. Residues glutamate 209 and aspartate 294 each contribute to the substrate site. Residue aspartate 294 participates in Zn(2+) binding.

This sequence belongs to the metallo-dependent hydrolases superfamily. MTA/SAH deaminase family. Zn(2+) is required as a cofactor.

The enzyme catalyses S-adenosyl-L-homocysteine + H2O + H(+) = S-inosyl-L-homocysteine + NH4(+). It carries out the reaction S-methyl-5'-thioadenosine + H2O + H(+) = S-methyl-5'-thioinosine + NH4(+). In terms of biological role, catalyzes the deamination of 5-methylthioadenosine and S-adenosyl-L-homocysteine into 5-methylthioinosine and S-inosyl-L-homocysteine, respectively. Is also able to deaminate adenosine. The polypeptide is 5-methylthioadenosine/S-adenosylhomocysteine deaminase (Dictyoglomus turgidum (strain DSM 6724 / Z-1310)).